Here is a 288-residue protein sequence, read N- to C-terminus: ATP phosphoribosyltransferase (288 aa).

It belongs to the ATP phosphoribosyltransferase family. Long subfamily. The cofactor is Mg(2+).

The protein localises to the cytoplasm. The catalysed reaction is 1-(5-phospho-beta-D-ribosyl)-ATP + diphosphate = 5-phospho-alpha-D-ribose 1-diphosphate + ATP. Its pathway is amino-acid biosynthesis; L-histidine biosynthesis; L-histidine from 5-phospho-alpha-D-ribose 1-diphosphate: step 1/9. Feedback inhibited by histidine. Catalyzes the condensation of ATP and 5-phosphoribose 1-diphosphate to form N'-(5'-phosphoribosyl)-ATP (PR-ATP). Has a crucial role in the pathway because the rate of histidine biosynthesis seems to be controlled primarily by regulation of HisG enzymatic activity. This Methanocaldococcus jannaschii (strain ATCC 43067 / DSM 2661 / JAL-1 / JCM 10045 / NBRC 100440) (Methanococcus jannaschii) protein is ATP phosphoribosyltransferase (hisG).